The following is a 199-amino-acid chain: Replication protein (199 aa).

It belongs to the Gram-positive plasmids replication protein type 2 family.

Its function is as follows. Is essential for plasmid replication. Nicks the positive strand at the plus origin of replication. This Staphylococcus aureus protein is Replication protein (repF).